Here is a 108-residue protein sequence, read N- to C-terminus: Type III secretion system chaperone SseA (108 aa).

Residues 69–97 (NQEAEKDLKKIVSLFKQLEVRLKQLNAQA) adopt a coiled-coil conformation.

Binds to SseB and SseD.

It localises to the cytoplasm. In terms of biological role, functions as a type III secretion system (T3SS) chaperone, which is required for SseB and SseD accumulation and secretion. May have a direct role in secretion of SseB and SseD, or may facilitate their correct folding, for efficient secretion and function. Required for survival and replication within epithelial cells and macrophages. This chain is Type III secretion system chaperone SseA (sseA), found in Salmonella typhimurium (strain LT2 / SGSC1412 / ATCC 700720).